A 307-amino-acid chain; its full sequence is Protoheme IX farnesyltransferase (307 aa).

9 helical membrane passes run 31-51 (VMSL…YSVH), 52-72 (PFIA…AGAI), 102-119 (ALSF…FMAL), 123-145 (LLAS…IWLK), 151-171 (NIVI…AAVS), 179-199 (VILF…LALF), 225-245 (ILIY…IGMS), 247-267 (FIYL…AGSL), and 281-301 (FVYS…TNTI).

The protein belongs to the UbiA prenyltransferase family. Protoheme IX farnesyltransferase subfamily.

It localises to the cell inner membrane. It carries out the reaction heme b + (2E,6E)-farnesyl diphosphate + H2O = Fe(II)-heme o + diphosphate. Its pathway is porphyrin-containing compound metabolism; heme O biosynthesis; heme O from protoheme: step 1/1. Its function is as follows. Converts heme B (protoheme IX) to heme O by substitution of the vinyl group on carbon 2 of heme B porphyrin ring with a hydroxyethyl farnesyl side group. This Rickettsia canadensis (strain McKiel) protein is Protoheme IX farnesyltransferase.